We begin with the raw amino-acid sequence, 34 residues long: Delta-theraphotoxin-Hm1b (34 aa).

3 disulfide bridges follow: C2–C16, C9–C21, and C15–C28. F34 bears the Phenylalanine amide mark.

The protein belongs to the neurotoxin 10 (Hwtx-1) family. 09 (HaTx) subfamily. As to expression, expressed by the venom gland.

The protein localises to the secreted. Gating-modifier toxin that potently and selectively acts on Nav1.1/SCN1A and Nav1.3/SCN3A. It enhances hNav1.1/SCN1A currents and delays fast inactivation of the channel (EC(50)=11.6 nM), leading to a sustained current. Similar effects are observed at Nav1.3/SCN3A (EC(50)=11.8 nM), but with less sustained currents. When tested on Nav1.2/SCN2A, the native toxin decreases the peak current by 50% at saturating concentration, whereas the recombinant toxin only shows a weak decrease of peak current. The native toxin specifically activates the voltage-gated sodium channel Nav1.1/SCN1A in somatosensory neurons to elicit acute pain and mechanical allodynia. When tested on Nav1.1/SCN1A, the toxin induces a hyperpolarising shift of the voltage-dependence of steady-state activation, and induces a depolarizing shift in the voltage dependence of inactivation. In addition, it does not modify the recovery from fast inactivation in Nav1.1/SCN1A. The toxin hydrophobic face probably interacts with the domain IV voltage-sensor of Nav1.1/SCN1A and Nav1.3/SCN3A and may trap the voltage-sensing S4 helix in a partially activated state. In vivo, intracerebroventricular injection into mice elicits convulsions, spasms, tremors and rapid death. When injected into mouse hindpaw, the toxin elicits an immediate and robust response to pain. However, intraplantar injection of toxin does not cause neurogenic inflammation or alter sensitivity to heat, indicative of a modality-specific effect on mechanosensitive neurons. In Heteroscodra maculata (Togo starburst tarantula), this protein is Delta-theraphotoxin-Hm1b.